Here is a 374-residue protein sequence, read N- to C-terminus: Amino acid binding protein (374 aa).

Residues 1 to 27 (MSKKLFRKGILALAVSSVMGLSTHALA) form the signal peptide.

The protein belongs to the leucine-binding protein family.

It is found in the periplasm. Binds primarily proteinogenic amino acids. This Pseudomonas aeruginosa (strain ATCC 15692 / DSM 22644 / CIP 104116 / JCM 14847 / LMG 12228 / 1C / PRS 101 / PAO1) protein is Amino acid binding protein.